Consider the following 142-residue polypeptide: Taurine up-regulated 1 protein (142 aa).

The N-terminal stretch at 1–40 (MARPPPLPGLVGRRSGRAVDRAIGWRLFLLLWHPALGAQA) is a signal peptide. Over 41–123 (RPPRRAPGGR…ARTQLEGQEG (83 aa)) the chain is Extracellular. The helical transmembrane segment at 124-140 (AGGWLVVGFLLCLFLLM) threads the bilayer. The Cytoplasmic portion of the chain corresponds to 141 to 142 (PP).

In terms of tissue distribution, widely expressed in the adult with highest levels in placenta and testis. Also expressed in a number of embryonic tissues at multiple embryonic stages.

It is found in the nucleus membrane. It localises to the mitochondrion membrane. The protein localises to the cytoplasm. This is Taurine up-regulated 1 protein from Mus musculus (Mouse).